The primary structure comprises 123 residues: Ribosome-binding factor A (123 aa).

It belongs to the RbfA family. Monomer. Binds 30S ribosomal subunits, but not 50S ribosomal subunits or 70S ribosomes.

Its subcellular location is the cytoplasm. Functionally, one of several proteins that assist in the late maturation steps of the functional core of the 30S ribosomal subunit. Associates with free 30S ribosomal subunits (but not with 30S subunits that are part of 70S ribosomes or polysomes). Required for efficient processing of 16S rRNA. May interact with the 5'-terminal helix region of 16S rRNA. The sequence is that of Ribosome-binding factor A from Magnetococcus marinus (strain ATCC BAA-1437 / JCM 17883 / MC-1).